The chain runs to 1124 residues: Transient-receptor-potential-like protein (1124 aa).

Residues 1–24 are disordered; that stretch reads MGRKKKLPTGVSSGVSHASSAPKS. Residues 1 to 340 are Cytoplasmic-facing; the sequence is MGRKKKLPTG…GFRRKSIVDK (340 aa). The segment covering 10 to 21 has biased composition (low complexity); that stretch reads GVSSGVSHASSA. ANK repeat units lie at residues 40–69, 78–107, and 152–181; these read LEEK…RHQH, LGRR…ETKD, and PDIT…AVPV. A helical membrane pass occupies residues 341 to 361; sequence VICIAQVAVLFPLYCLIYMCA. The Extracellular segment spans residues 362-373; it reads PNCRTGQLMRKP. Residues 374–394 form a helical membrane-spanning segment; sequence FMKFLIHASSYLFFLFILILV. The Cytoplasmic portion of the chain corresponds to 395 to 431; the sequence is SQRADDDFVRIFGTTRMKKELAEQELRQRGQTPSKLE. Residues 432 to 452 form a helical membrane-spanning segment; sequence LIVVMYVIGFVWEEVQEIFAV. At 453-512 the chain is on the extracellular side; it reads GMKSYLRNMWNFIDFLRNSLYVSVMCLRAFAYIQQATEIARDPQMAYIPREKWHDFDPQL. The helical transmembrane segment at 513-533 threads the bilayer; sequence IAEGLFAAANVFSALKLVHLF. The Cytoplasmic segment spans residues 534 to 548; the sequence is SINPHLGPLQISLGR. Residues 549-569 traverse the membrane as a helical segment; it reads MVIDIVKFFFIYTLVLFAFAC. Residues 570 to 645 are Extracellular-facing; that stretch reads GLNQLLWYFA…GIKSYTRFWG (76 aa). Residues 646-666 traverse the membrane as a helical segment; sequence LLMFGSYSVINVIVLLNLLIA. Topologically, residues 667–1124 are cytoplasmic; the sequence is MMSNSYAMID…TSPQRPKHRN (458 aa). Calmodulin-binding stretches follow at residues 710-728 and 853-895; these read SVKW…IDRQ and IPSK…SQIG. Disordered stretches follow at residues 978 to 1013 and 1031 to 1124; these read RAMA…GVSH and LIAN…KHRN. Low complexity predominate over residues 1035-1063; the sequence is SAPSAPTAPPKKSAPTAPTPTYKPTTHAP. Composition is skewed to basic and acidic residues over residues 1069 to 1081 and 1090 to 1106; these read GNRE…DGVR and HVVD…RDNV. Over residues 1107–1118 the composition is skewed to polar residues; that stretch reads SDISSIASTSPQ.

This sequence belongs to the transient receptor (TC 1.A.4) family. STrpC subfamily. In terms of assembly, forms heteromultimers with Trpgamma and, to a lower extent, with trp. Interacts with Fkbp59 in vivo and is found in the inaD signaling complex. Expressed predominantly in the rhabdomeres of photoreceptor cells.

It localises to the membrane. Its subcellular location is the cell projection. The protein localises to the rhabdomere membrane. In terms of biological role, a light-sensitive calcium channel that is required for inositide-mediated Ca(2+) entry in the retina during phospholipase C (PLC)-mediated phototransduction. Required for vision in the dark and in dim light. Binds calmodulin. Trp and trpl act together in the light response, although it is unclear whether as heteromultimers or distinct units. Also forms a functional cation channel with Trpgamma. Activated by fatty acids, metabolic stress, inositols and GTP-binding proteins. The sequence is that of Transient-receptor-potential-like protein (trpl) from Drosophila melanogaster (Fruit fly).